The primary structure comprises 1247 residues: Structural polyprotein (1247 aa).

Positions R36 to K67 are host transcription inhibition. A disordered region spans residues L53–R103. Basic residues-rich tracts occupy residues K59–Q71 and N81–R100. Residues P60 to P98 carry the Nuclear localization signal motif. A binding to the viral RNA region spans residues K83–I113. A ribosome-binding region spans residues P98–C112. C112 and C127 are disulfide-bonded. Residues C112–W260 form the Peptidase S3 domain. H138 functions as the Charge relay system in the catalytic mechanism. The short motif at I143 to F153 is the Nuclear export signal element. The interval K154–Y159 is interaction with spike glycoprotein E2. D160 serves as the catalytic Charge relay system. Positions P182–A192 are dimerization of the capsid protein. Residue S212 is the Charge relay system of the active site. Positions D218 to R222 are dimerization of the capsid protein. Positions S261 to T273 are functions as an uncleaved signal peptide for the precursor of protein E3/E2. Cystine bridges form between C268-C277, C282-C286, C285-C317, C343-C449, C346-C352, C415-C429, C477-C590, C525-C549, and C527-C544. Residue N272 is glycosylated (N-linked (GlcNAc...) asparagine; by host). Over N325–T691 the chain is Extracellular. An N-linked (GlcNAc...) asparagine; by host glycan is attached at N587. The chain crosses the membrane as a helical span at residues I692 to M712. Residues C713–A747 are Cytoplasmic-facing. The interaction with the capsid protein stretch occupies residues C715 to R719. S-palmitoyl cysteine; by host attachment occurs at residues C720, C740, and C741. The transient transmembrane before p62-6K protein processing stretch occupies residues C720–C740. The cysteines at positions 720 and 741 are disulfide-linked. The Extracellular segment spans residues A748–Q762. The helical transmembrane segment at P763–L783 threads the bilayer. The Cytoplasmic portion of the chain corresponds to K784–P787. A helical transmembrane segment spans residues C788–A808. Topologically, residues Y809–G1223 are extracellular. 4 cysteine pairs are disulfide-bonded: C857–C922, C870–C902, C871–C904, and C876–C886. Residues V892–T909 form an E1 fusion peptide loop region. Residues N949 and N1078 are each glycosylated (N-linked (GlcNAc...) asparagine; by host). Cystine bridges form between C1067-C1079, C1109-C1184, C1114-C1188, and C1136-C1178. A helical membrane pass occupies residues G1224–F1244. The S-palmitoyl cysteine; by host moiety is linked to residue C1241. At S1245 to H1247 the chain is on the cytoplasmic side.

In terms of assembly, homodimer. Homomultimer. Interacts with host karyopherin KPNA4; this interaction allows the nuclear import of the viral capsid protein. Interacts with spike glycoprotein E2. Interacts with host IRAK1; the interaction leads to inhibition of IRAK1-dependent signaling. As to quaternary structure, the precursor of protein E3/E2 and E1 form a heterodimer shortly after synthesis. The precursor of protein E3/E2 and E1 form a heterodimer shortly after synthesis. Processing of the precursor of protein E3/E2 into E2 and E3 results in a heterodimer of the spike glycoproteins E2 and E1. Spike at virion surface are constituted of three E2-E1 heterodimers. After target cell attachment and endocytosis, E1 change conformation to form homotrimers. Interacts with 6K protein. In terms of assembly, interacts with spike glycoprotein E1. Processing of the precursor of protein E3/E2 into E2 and E3 results in a heterodimer of the spike glycoproteins E2 and E1. Spike at virion surface are constituted of a trimer of E2-E1 heterodimers. Interacts with 6K protein. Interacts with host MXRA8; this interaction mediates virus entry. As to quaternary structure, oligomer. Interacts with spike glycoprotein E1. Interacts with spike glycoprotein E2. Post-translationally, structural polyprotein: Specific enzymatic cleavages in vivo yield mature proteins. Capsid protein is auto-cleaved during polyprotein translation, unmasking a signal peptide at the N-terminus of the precursor of E3/E2. The remaining polyprotein is then targeted to the host endoplasmic reticulum, where host signal peptidase cleaves it into pE2, 6K and E1 proteins. pE2 is further processed to mature E3 and E2 by host furin in trans-Golgi vesicle. In terms of processing, palmitoylated via thioester bonds. These palmitoylations may induce disruption of the C-terminus transmembrane. This would result in the reorientation of E2 C-terminus from lumenal to cytoplasmic side. N-glycosylated. Post-translationally, palmitoylated via thioester bonds.

The protein localises to the virion. The protein resides in the host cytoplasm. Its subcellular location is the host cell membrane. It localises to the host nucleus. It is found in the virion membrane. The protein localises to the host Golgi apparatus. The protein resides in the host trans-Golgi network. Its subcellular location is the host endoplasmic reticulum. It carries out the reaction Autocatalytic release of the core protein from the N-terminus of the togavirus structural polyprotein by hydrolysis of a -Trp-|-Ser- bond.. Forms an icosahedral capsid with a T=4 symmetry composed of 240 copies of the capsid protein surrounded by a lipid membrane through which penetrate 80 spikes composed of trimers of E1-E2 heterodimers. The capsid protein binds to the viral RNA genome at a site adjacent to a ribosome binding site for viral genome translation following genome release. Possesses a protease activity that results in its autocatalytic cleavage from the nascent structural protein. Following its self-cleavage, the capsid protein transiently associates with ribosomes, and within several minutes the protein binds to viral RNA and rapidly assembles into icosahedric core particles. The resulting nucleocapsid eventually associates with the cytoplasmic domain of the spike glycoprotein E2 at the cell membrane, leading to budding and formation of mature virions. In case of infection, new virions attach to target cells and after clathrin-mediated endocytosis their membrane fuses with the host endosomal membrane. This leads to the release of the nucleocapsid into the cytoplasm, followed by an uncoating event necessary for the genomic RNA to become accessible. The uncoating might be triggered by the interaction of capsid proteins with ribosomes. Binding of ribosomes would release the genomic RNA since the same region is genomic RNA-binding and ribosome-binding. Specifically inhibits interleukin-1 receptor-associated kinase 1/IRAK1-dependent signaling during viral entry, representing a means by which the alphaviruses may evade innate immune detection and activation prior to viral gene expression. Its function is as follows. Provides the signal sequence for the translocation of the precursor of protein E3/E2 to the host endoplasmic reticulum. Furin-cleaved E3 remains associated with spike glycoprotein E1 and mediates pH protection of the latter during the transport via the secretory pathway. After virion release from the host cell, the assembly protein E3 is gradually released in the extracellular space. In terms of biological role, plays a role in viral attachment to target host cell, by binding to the cell receptor MXRA8. Synthesized as a p62 precursor which is processed by furin at the cell membrane just before virion budding, giving rise to E2-E1 heterodimer. The p62-E1 heterodimer is stable, whereas E2-E1 is unstable and dissociate at low pH. p62 is processed at the last step, presumably to avoid E1 fusion activation before its final export to cell surface. E2 C-terminus contains a transitory transmembrane that would be disrupted by palmitoylation, resulting in reorientation of the C-terminal tail from lumenal to cytoplasmic side. This step is critical since E2 C-terminus is involved in budding by interacting with capsid proteins. This release of E2 C-terminus in cytoplasm occurs lately in protein export, and precludes premature assembly of particles at the endoplasmic reticulum membrane. Functionally, acts as a viroporin that participates in virus glycoprotein processing and transport to the plasma membrane, cell permeabilization and budding of viral particles. Disrupts the calcium homeostasis of the cell, probably at the endoplasmic reticulum level. This leads to cytoplasmic calcium elevation. Because of its lipophilic properties, the 6K protein is postulated to influence the selection of lipids that interact with the transmembrane domains of the glycoproteins, which, in turn, affects the deformability of the bilayer required for the extreme curvature that occurs as budding proceeds. Present in low amount in virions, about 3% compared to viral glycoproteins. Class II viral fusion protein. Fusion activity is inactive as long as E1 is bound to E2 in mature virion. After virus attachment to target cell via host MXRA8 and endocytosis, acidification of the endosome induce dissociation of E1/E2 heterodimer and concomitant trimerization of the E1 subunits. This E1 trimer is fusion active, and promotes release of viral nucleocapsid in cytoplasm after endosome and viral membrane fusion. Efficient fusion requires the presence of cholesterol and sphingolipid in the target membrane. The polypeptide is Structural polyprotein (Anopheles (Human)).